Here is a 157-residue protein sequence, read N- to C-terminus: SsrA-binding protein (157 aa).

The disordered stretch occupies residues Lys-132–Gly-157. Residues Asp-135 to Arg-151 are compositionally biased toward basic and acidic residues.

This sequence belongs to the SmpB family.

It is found in the cytoplasm. Functionally, required for rescue of stalled ribosomes mediated by trans-translation. Binds to transfer-messenger RNA (tmRNA), required for stable association of tmRNA with ribosomes. tmRNA and SmpB together mimic tRNA shape, replacing the anticodon stem-loop with SmpB. tmRNA is encoded by the ssrA gene; the 2 termini fold to resemble tRNA(Ala) and it encodes a 'tag peptide', a short internal open reading frame. During trans-translation Ala-aminoacylated tmRNA acts like a tRNA, entering the A-site of stalled ribosomes, displacing the stalled mRNA. The ribosome then switches to translate the ORF on the tmRNA; the nascent peptide is terminated with the 'tag peptide' encoded by the tmRNA and targeted for degradation. The ribosome is freed to recommence translation, which seems to be the essential function of trans-translation. The chain is SsrA-binding protein from Rhodopseudomonas palustris (strain ATCC BAA-98 / CGA009).